Reading from the N-terminus, the 154-residue chain is Superoxide dismutase [Cu-Zn] (154 aa).

3 residues coordinate Cu cation: H47, H49, and H64. C58 and C147 are disulfide-bonded. Positions 62–89 are disordered; it reads GPHFNPFKKNHGGPTDSERHVGDLGNVK. Zn(2+) contacts are provided by H64, H72, H81, and D84. H121 is a binding site for Cu cation. R144 provides a ligand contact to substrate.

Belongs to the Cu-Zn superoxide dismutase family. As to quaternary structure, homodimer. Requires Cu cation as cofactor. Zn(2+) serves as cofactor.

The protein resides in the cytoplasm. The catalysed reaction is 2 superoxide + 2 H(+) = H2O2 + O2. Functionally, destroys radicals which are normally produced within the cells and which are toxic to biological systems. The sequence is that of Superoxide dismutase [Cu-Zn] (SOD1) from Yarrowia lipolytica (strain CLIB 122 / E 150) (Yeast).